A 777-amino-acid polypeptide reads, in one-letter code: C6 finger domain transcription factor adaR (777 aa).

Positions 1 to 20 (MEQRSSPARSLPPRKTTTTP) are disordered. The zn(2)-C6 fungal-type DNA-binding region spans 24 to 50 (CELCRKRKVKCDKLTPCTNCAASGTVC). Disordered stretches follow at residues 61–85 (GRHATRPRRVSSPPPTSAPGETDRI), 111–144 (NSHSHTRTPSATSREQSVQLSDTSTFQTAPNPNT), 182–213 (SSLAGGQEGPIPSSDSAKSEPPNDDGIQVLGL), 419–440 (PQHINDSDFDPTTAAHSDPNRE), 468–496 (RKVDGGIPTPTSSTSGTSTSRSRTCDPSW), and 655–699 (LPPS…PTGS). The span at 475 to 489 (PTPTSSTSGTSTSRS) shows a compositional bias: low complexity. Residues 668-677 (ATPPTFPGVP) are compositionally biased toward pro residues.

The protein localises to the nucleus. Its function is as follows. Transcription factor that specifically regulates the expression of the ada gene cluster involved in the biosynthesis of the linear tetracyclic TAN-1612 neuropeptide Y receptor antagonist. The chain is C6 finger domain transcription factor adaR from Aspergillus niger (strain ATCC MYA-4892 / CBS 513.88 / FGSC A1513).